The following is a 145-amino-acid chain: Ribonuclease H (145 aa).

The RNase H type-1 domain occupies 1–142 (MKEVVIYTDG…CDEIARSMIK (142 aa)). 4 residues coordinate Mg(2+): Asp-9, Glu-47, Asp-69, and Asp-134.

It belongs to the RNase H family. As to quaternary structure, monomer. Mg(2+) serves as cofactor.

The protein localises to the cytoplasm. It carries out the reaction Endonucleolytic cleavage to 5'-phosphomonoester.. In terms of biological role, endonuclease that specifically degrades the RNA of RNA-DNA hybrids. The polypeptide is Ribonuclease H (Caldicellulosiruptor saccharolyticus (strain ATCC 43494 / DSM 8903 / Tp8T 6331)).